Reading from the N-terminus, the 193-residue chain is ATP-dependent Clp protease proteolytic subunit 1 (193 aa).

Serine 98 acts as the Nucleophile in catalysis. Residue histidine 123 is part of the active site.

The protein belongs to the peptidase S14 family. Fourteen ClpP subunits assemble into 2 heptameric rings which stack back to back to give a disk-like structure with a central cavity, resembling the structure of eukaryotic proteasomes.

The protein resides in the cytoplasm. It catalyses the reaction Hydrolysis of proteins to small peptides in the presence of ATP and magnesium. alpha-casein is the usual test substrate. In the absence of ATP, only oligopeptides shorter than five residues are hydrolyzed (such as succinyl-Leu-Tyr-|-NHMec, and Leu-Tyr-Leu-|-Tyr-Trp, in which cleavage of the -Tyr-|-Leu- and -Tyr-|-Trp bonds also occurs).. In terms of biological role, cleaves peptides in various proteins in a process that requires ATP hydrolysis. Has a chymotrypsin-like activity. Plays a major role in the degradation of misfolded proteins. This chain is ATP-dependent Clp protease proteolytic subunit 1, found in Bacillus cereus (strain ZK / E33L).